Here is a 70-residue protein sequence, read N- to C-terminus: Omega-conotoxin-like Bu1 (70 aa).

A signal peptide spans M1–A22. Residues E23–R45 constitute a propeptide that is removed on maturation. 3 cysteine pairs are disulfide-bonded: C46–C61, C53–C65, and C60–C70.

This sequence belongs to the conotoxin O1 superfamily. In terms of tissue distribution, expressed by the venom duct.

It localises to the secreted. In terms of biological role, omega-conotoxins act at presynaptic membranes, they bind and block voltage-gated calcium channels (Cav). This is Omega-conotoxin-like Bu1 from Conus bullatus (Bubble cone).